A 569-amino-acid polypeptide reads, in one-letter code: MGKKLDLSKLTDDEAKHIWEVVQRDFDLRRKEEERLGGLKDRIKKESSQRELLSDAAHLNETHCARCLQPYRLLVAPKRQCLDCHLFTCQDCSHAHPEEEGWLCDPCHLARVVKMGSLEWYYGHLRARFKRFGSAKVIRSLCGRLQGGGGPEPSPGEGSGDSEQTEEDGELDTVAQAQPLGSKKKRLSIHGLDFDADSDGSTQSSGHPPYLSPVPMATDSLQTLTGEPRAKDTSQEAVVLEEADVGAPGCHPHPEEQTDSLSAARQDTLTEPRFPRQSCTTALGLAVTPGPGVISSSERLSSRYPADEGTSDDEDTGADGVASQSLTWRDCAPAESQHLTGHQPTDADREEETLKRKLEEMTSHISDQGASSEEEGSKEEEAGLNRKTSIEDLPGAAPEVLVASGQTSRQETSPRGPQELMQPGRTTDQELLELEDRVAVTASEVQQVESEVSNIKSKIAALQAAGLSVRPSGKPQRRSNLPIFLPRLVGRLGQTPKDPNAEPSDEVKVMTAPYLLRRKFSNPPKSQDKAGDSFDRQSAYRGSLTQRNPNSRKGVANHSFAKPVMTQRP.

Residues 4–124 form the RabBD domain; that stretch reads KLDLSKLTDD…MGSLEWYYGH (121 aa). An FYVE-type zinc finger spans residues 58-112; it reads HLNETHCARCLQPYRLLVAPKRQCLDCHLFTCQDCSHAHPEEEGWLCDPCHLARV. Residues 143 to 430 form a disordered region; that stretch reads GRLQGGGGPE…MQPGRTTDQE (288 aa). Composition is skewed to basic and acidic residues over residues 352–362 and 379–390; these read ETLKRKLEEMT and EEEAGLNRKTSI. Polar residues predominate over residues 404–415; the sequence is SGQTSRQETSPR. A coiled-coil region spans residues 431 to 465; the sequence is LLELEDRVAVTASEVQQVESEVSNIKSKIAALQAA. The segment at 490 to 569 is disordered; sequence GRLGQTPKDP…FAKPVMTQRP (80 aa). Residues 526–535 are compositionally biased toward basic and acidic residues; that stretch reads SQDKAGDSFD.

Binds RAB27A that has been activated by GTP-binding via its N-terminus. Binds MYO5A via its C-terminal coiled coil domain.

The protein resides in the melanosome. Rab effector protein involved in melanosome transport. Serves as link between melanosome-bound RAB27A and the motor protein MYO5A. The sequence is that of Melanophilin (MLPH) from Felis catus (Cat).